Consider the following 949-residue polypeptide: Valine--tRNA ligase (949 aa).

The short motif at 45–55 (PNVTGVLHMGH) is the 'HIGH' region element. The 'KMSKS' region motif lies at 561–565 (KMSKS). Residue Lys-564 participates in ATP binding. Residues 882–949 (EELLKQEKTR…EIKEKLMTLP (68 aa)) adopt a coiled-coil conformation.

This sequence belongs to the class-I aminoacyl-tRNA synthetase family. ValS type 1 subfamily. As to quaternary structure, monomer.

It is found in the cytoplasm. It carries out the reaction tRNA(Val) + L-valine + ATP = L-valyl-tRNA(Val) + AMP + diphosphate. Functionally, catalyzes the attachment of valine to tRNA(Val). As ValRS can inadvertently accommodate and process structurally similar amino acids such as threonine, to avoid such errors, it has a 'posttransfer' editing activity that hydrolyzes mischarged Thr-tRNA(Val) in a tRNA-dependent manner. The polypeptide is Valine--tRNA ligase (Protochlamydia amoebophila (strain UWE25)).